The sequence spans 175 residues: DDB1- and CUL4-associated factor 16 (175 aa).

The interval 1 to 42 (MGPRNPSPDPLSESESEEEENTNYLNESSGEEWDSSEEEDPV) is disordered. Composition is skewed to acidic residues over residues 12-21 (SESESEEEEN) and 29-41 (SGEE…EEDP). Lys61 is subject to N6-acetyllysine.

As to quaternary structure, interacts with DDB1 and CUL4A.

The protein localises to the nucleus. It participates in protein modification; protein ubiquitination. Functionally, functions as a substrate recognition component for CUL4-DDB1 E3 ubiquitin-protein ligase complex, which mediates ubiquitination and proteasome-dependent degradation of nuclear proteins. The chain is DDB1- and CUL4-associated factor 16 (DCAF16) from Bos taurus (Bovine).